We begin with the raw amino-acid sequence, 309 residues long: Methionyl-tRNA formyltransferase (309 aa).

109–112 (SLLP) is a binding site for (6S)-5,6,7,8-tetrahydrofolate.

The protein belongs to the Fmt family.

The catalysed reaction is L-methionyl-tRNA(fMet) + (6R)-10-formyltetrahydrofolate = N-formyl-L-methionyl-tRNA(fMet) + (6S)-5,6,7,8-tetrahydrofolate + H(+). Functionally, attaches a formyl group to the free amino group of methionyl-tRNA(fMet). The formyl group appears to play a dual role in the initiator identity of N-formylmethionyl-tRNA by promoting its recognition by IF2 and preventing the misappropriation of this tRNA by the elongation apparatus. This Clostridium novyi (strain NT) protein is Methionyl-tRNA formyltransferase.